We begin with the raw amino-acid sequence, 606 residues long: Putative helicase 172L (606 aa).

Residues 59–264 (GEKTWGVRGG…WAQLRFCGYK (206 aa)) enclose the Helicase ATP-binding domain. Position 72–79 (72–79 (LCMGLGKT)) interacts with ATP. One can recognise a Helicase C-terminal domain in the interval 437 to 586 (YIKSSNFEIS…ASYLEGKERI (150 aa)).

The protein belongs to the SNF2/RAD54 helicase family.

This chain is Putative helicase 172L, found in Invertebrate iridescent virus 6 (IIV-6).